Consider the following 181-residue polypeptide: Ribosome-recycling factor (181 aa).

This sequence belongs to the RRF family.

The protein resides in the cytoplasm. In terms of biological role, responsible for the release of ribosomes from messenger RNA at the termination of protein biosynthesis. May increase the efficiency of translation by recycling ribosomes from one round of translation to another. The polypeptide is Ribosome-recycling factor (Tropheryma whipplei (strain TW08/27) (Whipple's bacillus)).